The sequence spans 305 residues: Tyrosine recombinase XerC (305 aa).

Positions 2 to 88 (TNKQRLVHLF…ALRSFYKFLL (87 aa)) constitute a Core-binding (CB) domain. A Tyr recombinase domain is found at 109–295 (RIPSFLYEEE…SKDSLRKTYM (187 aa)). Catalysis depends on residues Arg-149, Lys-173, His-247, Arg-250, and His-273. Tyr-282 serves as the catalytic O-(3'-phospho-DNA)-tyrosine intermediate.

This sequence belongs to the 'phage' integrase family. XerC subfamily. In terms of assembly, forms a cyclic heterotetrameric complex composed of two molecules of XerC and two molecules of XerD.

The protein localises to the cytoplasm. Site-specific tyrosine recombinase, which acts by catalyzing the cutting and rejoining of the recombining DNA molecules. The XerC-XerD complex is essential to convert dimers of the bacterial chromosome into monomers to permit their segregation at cell division. It also contributes to the segregational stability of plasmids. The chain is Tyrosine recombinase XerC from Bacillus pumilus (strain SAFR-032).